A 168-amino-acid chain; its full sequence is Siroheme decarboxylase NirH subunit (168 aa).

This sequence belongs to the Ahb/Nir family. Probably forms a complex composed of NirD, NirL, NirG and NirH. All proteins are required for the total conversion of siroheme to didecarboxysiroheme.

It catalyses the reaction siroheme + 2 H(+) = 12,18-didecarboxysiroheme + 2 CO2. The protein operates within porphyrin-containing compound metabolism. Functionally, involved in heme d1 biosynthesis. Catalyzes the decarboxylation of siroheme into didecarboxysiroheme. This is Siroheme decarboxylase NirH subunit from Stutzerimonas stutzeri (Pseudomonas stutzeri).